The following is a 96-amino-acid chain: Large ribosomal subunit protein uL23 (96 aa).

It belongs to the universal ribosomal protein uL23 family. Part of the 50S ribosomal subunit. Contacts protein L29, and trigger factor when it is bound to the ribosome.

In terms of biological role, one of the early assembly proteins it binds 23S rRNA. One of the proteins that surrounds the polypeptide exit tunnel on the outside of the ribosome. Forms the main docking site for trigger factor binding to the ribosome. This is Large ribosomal subunit protein uL23 from Finegoldia magna (strain ATCC 29328 / DSM 20472 / WAL 2508) (Peptostreptococcus magnus).